We begin with the raw amino-acid sequence, 505 residues long: Deoxyguanosinetriphosphate triphosphohydrolase (505 aa).

The HD domain occupies 66–273 (RLTHSMEVQQ…MEAADDISYC (208 aa)).

Belongs to the dGTPase family. Type 1 subfamily. Homotetramer. Requires Mg(2+) as cofactor.

It carries out the reaction dGTP + H2O = 2'-deoxyguanosine + triphosphate + H(+). In terms of biological role, dGTPase preferentially hydrolyzes dGTP over the other canonical NTPs. In Salmonella enteritidis PT4 (strain P125109), this protein is Deoxyguanosinetriphosphate triphosphohydrolase.